A 539-amino-acid chain; its full sequence is 2-isopropylmalate synthase (539 aa).

Residues 8–269 enclose the Pyruvate carboxyltransferase domain; the sequence is VLIFDTTLRD…YFNPFFGRPP (262 aa). Mn(2+) contacts are provided by D17, H208, H210, and N244. The regulatory domain stretch occupies residues 408–539; sequence QLKLVQVSCG…DLAKVEKKGI (132 aa).

This sequence belongs to the alpha-IPM synthase/homocitrate synthase family. LeuA type 1 subfamily. In terms of assembly, homodimer. Requires Mn(2+) as cofactor.

It localises to the cytoplasm. It carries out the reaction 3-methyl-2-oxobutanoate + acetyl-CoA + H2O = (2S)-2-isopropylmalate + CoA + H(+). It participates in amino-acid biosynthesis; L-leucine biosynthesis; L-leucine from 3-methyl-2-oxobutanoate: step 1/4. Its function is as follows. Catalyzes the condensation of the acetyl group of acetyl-CoA with 3-methyl-2-oxobutanoate (2-ketoisovalerate) to form 3-carboxy-3-hydroxy-4-methylpentanoate (2-isopropylmalate). This Prochlorococcus marinus (strain NATL2A) protein is 2-isopropylmalate synthase.